Here is a 358-residue protein sequence, read N- to C-terminus: Peptide chain release factor 1 (358 aa).

At Gln233 the chain carries N5-methylglutamine.

It belongs to the prokaryotic/mitochondrial release factor family. In terms of processing, methylated by PrmC. Methylation increases the termination efficiency of RF1.

It localises to the cytoplasm. Peptide chain release factor 1 directs the termination of translation in response to the peptide chain termination codons UAG and UAA. The polypeptide is Peptide chain release factor 1 (Clostridium botulinum (strain Loch Maree / Type A3)).